The chain runs to 474 residues: Cyclin-dependent kinase 18 (474 aa).

Ser-14, Ser-74, Ser-89, Ser-98, Ser-117, and Ser-132 each carry phosphoserine. The tract at residues Asp-44 to Arg-87 is disordered. Positions Tyr-144–Phe-425 constitute a Protein kinase domain. Residues Leu-150 to Val-158 and Lys-173 each bind ATP. The active-site Proton acceptor is the Asp-265. 2 positions are modified to phosphoserine: Ser-440 and Ser-443.

The protein belongs to the protein kinase superfamily. CMGC Ser/Thr protein kinase family. CDC2/CDKX subfamily.

It catalyses the reaction L-seryl-[protein] + ATP = O-phospho-L-seryl-[protein] + ADP + H(+). The enzyme catalyses L-threonyl-[protein] + ATP = O-phospho-L-threonyl-[protein] + ADP + H(+). In terms of biological role, may play a role in signal transduction cascades in terminally differentiated cells. The sequence is that of Cyclin-dependent kinase 18 (CDK18) from Pongo abelii (Sumatran orangutan).